Reading from the N-terminus, the 2035-residue chain is Envoplakin (2035 aa).

Residues M1–S27 show a composition bias toward low complexity. Disordered stretches follow at residues M1 to Q37 and K63 to G84. The segment at M1–P841 is globular 1. The tract at residues K12–P28 is 4 X 4 AA tandem repeats of K-G-S-P. The segment covering G71–G84 has biased composition (polar residues). The stretch at Y229–Q330 is one Spectrin repeat. A disordered region spans residues Q400–D419. The SH3 domain occupies K413 to P470. Positions K842–H1664 form a coiled coil. A central fibrous rod domain region spans residues K842 to Q1674. Residues K1186 to G1227 form a Plectin 1 repeat. S1576 carries the phosphoserine modification. Basic and acidic residues predominate over residues K1607–K1631. A disordered region spans residues K1607–Q1637. The segment at E1675 to R2035 is globular 2. A Plectin 2 repeat occupies R1679 to Y1714. S1800 is subject to Phosphoserine. Plectin repeat units lie at residues F1819–G1856, Q1857–T1894, Q1895–V1932, L1933–G1970, and Q1971–G2008. S2026 is subject to Phosphoserine.

It belongs to the plakin or cytolinker family. May form a homodimer or a heterodimer with PPL.

The protein resides in the cell junction. Its subcellular location is the desmosome. It is found in the cornified envelope. The protein localises to the cytoplasm. It localises to the cytoskeleton. Functionally, component of the cornified envelope of keratinocytes. May link the cornified envelope to desmosomes and intermediate filaments. This is Envoplakin (Evpl) from Mus musculus (Mouse).